A 511-amino-acid chain; its full sequence is GMP synthase [glutamine-hydrolyzing] (511 aa).

Residues 5–195 (DILVLDFGSQ…AKYACNCESV (191 aa)) enclose the Glutamine amidotransferase type-1 domain. The active-site Nucleophile is cysteine 82. Catalysis depends on residues histidine 169 and glutamate 171. Residues 196–386 (WNMGSFAKTQ…LGLSKEVVYR (191 aa)) enclose the GMPS ATP-PPase domain. 223–229 (SGGVDSS) is an ATP binding site.

As to quaternary structure, homodimer.

It carries out the reaction XMP + L-glutamine + ATP + H2O = GMP + L-glutamate + AMP + diphosphate + 2 H(+). It participates in purine metabolism; GMP biosynthesis; GMP from XMP (L-Gln route): step 1/1. In terms of biological role, catalyzes the synthesis of GMP from XMP. This chain is GMP synthase [glutamine-hydrolyzing], found in Campylobacter jejuni subsp. doylei (strain ATCC BAA-1458 / RM4099 / 269.97).